A 480-amino-acid polypeptide reads, in one-letter code: Glutamyl-tRNA(Gln) amidotransferase subunit A (480 aa).

Residues K70 and S145 each act as charge relay system in the active site. The Acyl-ester intermediate role is filled by S169.

Belongs to the amidase family. GatA subfamily. As to quaternary structure, heterotrimer of A, B and C subunits.

The catalysed reaction is L-glutamyl-tRNA(Gln) + L-glutamine + ATP + H2O = L-glutaminyl-tRNA(Gln) + L-glutamate + ADP + phosphate + H(+). Allows the formation of correctly charged Gln-tRNA(Gln) through the transamidation of misacylated Glu-tRNA(Gln) in organisms which lack glutaminyl-tRNA synthetase. The reaction takes place in the presence of glutamine and ATP through an activated gamma-phospho-Glu-tRNA(Gln). In Lactobacillus delbrueckii subsp. bulgaricus (strain ATCC BAA-365 / Lb-18), this protein is Glutamyl-tRNA(Gln) amidotransferase subunit A.